The sequence spans 342 residues: Holliday junction branch migration complex subunit RuvB (342 aa).

The disordered stretch occupies residues Met-1–Ala-21. The tract at residues Met-1 to Tyr-184 is large ATPase domain (RuvB-L). ATP contacts are provided by residues Leu-23, Arg-24, Gly-65, Lys-68, Thr-69, Thr-70, Glu-131–Phe-133, Arg-174, Tyr-184, and Arg-221. Residue Thr-69 participates in Mg(2+) binding. A small ATPAse domain (RuvB-S) region spans residues Glu-185–Glu-255. Positions Pro-258–Phe-342 are head domain (RuvB-H). Positions 313 and 318 each coordinate DNA.

Belongs to the RuvB family. In terms of assembly, homohexamer. Forms an RuvA(8)-RuvB(12)-Holliday junction (HJ) complex. HJ DNA is sandwiched between 2 RuvA tetramers; dsDNA enters through RuvA and exits via RuvB. An RuvB hexamer assembles on each DNA strand where it exits the tetramer. Each RuvB hexamer is contacted by two RuvA subunits (via domain III) on 2 adjacent RuvB subunits; this complex drives branch migration. In the full resolvosome a probable DNA-RuvA(4)-RuvB(12)-RuvC(2) complex forms which resolves the HJ.

The protein localises to the cytoplasm. The enzyme catalyses ATP + H2O = ADP + phosphate + H(+). Functionally, the RuvA-RuvB-RuvC complex processes Holliday junction (HJ) DNA during genetic recombination and DNA repair, while the RuvA-RuvB complex plays an important role in the rescue of blocked DNA replication forks via replication fork reversal (RFR). RuvA specifically binds to HJ cruciform DNA, conferring on it an open structure. The RuvB hexamer acts as an ATP-dependent pump, pulling dsDNA into and through the RuvAB complex. RuvB forms 2 homohexamers on either side of HJ DNA bound by 1 or 2 RuvA tetramers; 4 subunits per hexamer contact DNA at a time. Coordinated motions by a converter formed by DNA-disengaged RuvB subunits stimulates ATP hydrolysis and nucleotide exchange. Immobilization of the converter enables RuvB to convert the ATP-contained energy into a lever motion, pulling 2 nucleotides of DNA out of the RuvA tetramer per ATP hydrolyzed, thus driving DNA branch migration. The RuvB motors rotate together with the DNA substrate, which together with the progressing nucleotide cycle form the mechanistic basis for DNA recombination by continuous HJ branch migration. Branch migration allows RuvC to scan DNA until it finds its consensus sequence, where it cleaves and resolves cruciform DNA. This is Holliday junction branch migration complex subunit RuvB from Cutibacterium acnes (strain DSM 16379 / KPA171202) (Propionibacterium acnes).